The chain runs to 799 residues: Cadherin-8 (799 aa).

The N-terminal stretch at 1–29 is a signal peptide; that stretch reads MPERLAEMLLDLWTPLIILWITLPPCIYM. A propeptide spanning residues 30–61 is cleaved from the precursor; sequence APMNQSQVLMSGSPLELNSLGEEQRILNRSKR. N-linked (GlcNAc...) asparagine glycosylation is found at asparagine 33 and asparagine 57. Cadherin domains lie at 62-167, 168-276, 277-391, 392-494, and 495-616; these read GWVW…APEF, LNGP…PPKF, AQSL…PPVF, SSPT…DNAP, and EFAS…YVLP. Over 62–621 the chain is Extracellular; sequence GWVWNQMFVL…AYVLPIGLSM (560 aa). Residue asparagine 188 is glycosylated (N-linked (GlcNAc...) asparagine). N-linked (GlcNAc...) asparagine glycosylation is found at asparagine 463, asparagine 473, and asparagine 544. Residues 622 to 642 form a helical membrane-spanning segment; the sequence is GALIAILACIILLLVIVVLFV. Topologically, residues 643-799 are cytoplasmic; that stretch reads TLRRHKNEPL…YSVGESDKET (157 aa). Serine 795 carries the post-translational modification Phosphoserine.

Mainly expressed in brain. Found in certain nerve cell lines, such as retinoblasts, glioma cells and neuroblasts.

The protein localises to the cell membrane. Functionally, cadherins are calcium-dependent cell adhesion proteins. They preferentially interact with themselves in a homophilic manner in connecting cells; cadherins may thus contribute to the sorting of heterogeneous cell types. The chain is Cadherin-8 (CDH8) from Homo sapiens (Human).